We begin with the raw amino-acid sequence, 179 residues long: Ribosome-recycling factor (179 aa).

The protein belongs to the RRF family.

Its subcellular location is the cytoplasm. Functionally, responsible for the release of ribosomes from messenger RNA at the termination of protein biosynthesis. May increase the efficiency of translation by recycling ribosomes from one round of translation to another. This is Ribosome-recycling factor from Chlamydia muridarum (strain MoPn / Nigg).